The chain runs to 107 residues: uncharacterized protein (107 aa).

This is an uncharacterized protein from Escherichia coli (strain K12).